A 184-amino-acid chain; its full sequence is Photosystem I assembly protein Ycf4 (184 aa).

Helical transmembrane passes span 22–42 and 57–77; these read FCWA…GTSS and ILFF…LFIS.

This sequence belongs to the Ycf4 family.

Its subcellular location is the plastid. The protein resides in the chloroplast thylakoid membrane. Seems to be required for the assembly of the photosystem I complex. The chain is Photosystem I assembly protein Ycf4 from Liriodendron tulipifera (Tuliptree).